A 344-amino-acid polypeptide reads, in one-letter code: Beta-1,4-galactosyltransferase 4 (344 aa).

Topologically, residues 1–12 (MGFNLTFHLSYK) are cytoplasmic. The chain crosses the membrane as a helical; Signal-anchor for type II membrane protein span at residues 13 to 38 (FRLLLLLTLCLTVVGWATSNYFVGAI). Over 39 to 344 (QEIPKAKEFM…NITVDFWFGA (306 aa)) the chain is Lumenal. Cys-77 and Cys-118 are disulfide-bonded. Residues 129–133 (PHRNR), 168–170 (FNR), and 195–196 (VD) contribute to the UDP-alpha-D-galactose site. A disulfide bond links Cys-189 and Cys-208. Asp-196 provides a ligand contact to Mn(2+). Residue Asn-220 is glycosylated (N-linked (GlcNAc...) asparagine). The UDP-alpha-D-galactose site is built by Tyr-224 and Trp-256. An N-acetyl-D-glucosamine-binding site is contributed by 258–261 (GEDD). Mn(2+) is bound at residue His-289. 289-291 (HTR) provides a ligand contact to UDP-alpha-D-galactose. An N-acetyl-D-glucosamine-binding site is contributed by Arg-301. N-linked (GlcNAc...) asparagine glycosylation occurs at Asn-335.

This sequence belongs to the glycosyltransferase 7 family. In terms of assembly, interacts with SLC35A2 (isoform 2; UGT1). Mn(2+) is required as a cofactor. In terms of processing, N-glycosylated. Highest expression is observed in placenta, pancreas, kidney and heart. Expressed in corneal epithelial cells.

Its subcellular location is the golgi apparatus membrane. The protein localises to the secreted. It carries out the reaction N-acetyl-D-glucosamine + UDP-alpha-D-galactose = beta-D-galactosyl-(1-&gt;4)-N-acetyl-D-glucosamine + UDP + H(+). The enzyme catalyses a beta-D-GlcNAc-(1-&gt;3)-beta-D-Gal-(1-&gt;4)-beta-D-Glc-(1&lt;-&gt;1)-Cer(d18:1(4E)) + UDP-alpha-D-galactose = a neolactoside nLc4Cer(d18:1(4E)) + UDP + H(+). The catalysed reaction is 3-O-{beta-D-galactosyl-(1-&gt;3)-[6-O-sulfo-N-acetyl-beta-D-glucosaminyl-(1-&gt;6)]-N-acetyl-alpha-D-galactosaminyl}-L-seryl-[protein] + UDP-alpha-D-galactose = 3-O-{beta-D-galactosyl-(1-&gt;3)-[beta-D-galactosyl-(1-&gt;4)-6-O-sulfo-N-acetyl-beta-D-glucosaminyl-(1-&gt;6)]-N-acetyl-alpha-D-galactosaminyl}-L-seryl-[protein] + UDP + H(+). It catalyses the reaction 3-O-{beta-D-galactosyl-(1-&gt;3)-[6-O-sulfo-N-acetyl-beta-D-glucosaminyl-(1-&gt;6)]-N-acetyl-alpha-D-galactosaminyl}-L-threonyl-[protein] + UDP-alpha-D-galactose = 3-O-{beta-D-galactosyl-(1-&gt;3)-[beta-D-galactosyl-(1-&gt;4)-6-O-sulfo-N-acetyl-beta-D-glucosaminyl-(1-&gt;6)]-N-acetyl-alpha-D-galactosaminyl}-L-threonyl-[protein] + UDP + H(+). It participates in protein modification; protein glycosylation. Its pathway is glycolipid biosynthesis. With respect to regulation, up-regulated by LALBA. In terms of biological role, galactose (Gal) transferase involved in the synthesis of terminal N-acetyllactosamine (LacNac) unit present on glycan chains of glycoproteins and glycosphingolipids. Catalyzes the transfer of Gal residue via a beta1-&gt;4 linkage from UDP-Gal to the non-reducing terminal N-acetyl glucosamine 6-O-sulfate (6-O-sulfoGlcNAc) in the linearly growing chain of both N- and O-linked keratan sulfate proteoglycans. Cooperates with B3GNT7 N-acetyl glucosamine transferase and CHST6 and CHST1 sulfotransferases to construct and elongate mono- and disulfated disaccharide units [-&gt;3Galbeta1-&gt;4(6-sulfoGlcNAcbeta)1-&gt;] and [-&gt;3(6-sulfoGalbeta)1-&gt;4(6-sulfoGlcNAcbeta)1-&gt;] within keratan sulfate polymer. Transfers Gal residue via a beta1-&gt;4 linkage to terminal 6-O-sulfoGlcNAc within the LacNac unit of core 2 O-glycans forming 6-sulfo-sialyl-Lewis X (sLex). May contribute to the generation of sLex epitope on mucin-type glycoproteins that serve as ligands for SELL/L-selectin, a major regulator of leukocyte migration. In the biosynthesis pathway of neolacto-series glycosphingolipids, transfers Gal residue via a beta1-&gt;4 linkage to terminal GlcNAc of a lactotriaosylceramide (Lc3Cer) acceptor to form a neolactotetraosylceramide. This is Beta-1,4-galactosyltransferase 4 from Homo sapiens (Human).